Reading from the N-terminus, the 748-residue chain is Histone-lysine N-methyltransferase EZH2 (748 aa).

Over residues 183-199 the composition is skewed to acidic residues; the sequence is DYEDDEDGEDNQDDERD. 2 disordered regions span residues 183–215 and 347–428; these read DYED…KETL and TPPK…NIEP. A compositionally biased stretch (basic and acidic residues) spans 200 to 215; that stretch reads DITKDQDDNMEEKETL. Residues 348-359 are compositionally biased toward basic residues; sequence PPKRPSGRRRGR. Residues 376–387 show a composition bias toward basic and acidic residues; that stretch reads EAKDTDSDREAG. Residues 505–607 form the CXC domain; the sequence is CRKIQLKKDG…SKNVSCKNCS (103 aa). An SET domain is found at 614-729; sequence KHLLLAPSDV…TGEELFFDYR (116 aa).

Belongs to the class V-like SAM-binding methyltransferase superfamily. Histone-lysine methyltransferase family. EZ subfamily. In terms of assembly, component of the prc2/eed-ezh2 complex.

It localises to the nucleus. The enzyme catalyses L-lysyl(27)-[histone H3] + 3 S-adenosyl-L-methionine = N(6),N(6),N(6)-trimethyl-L-lysyl(27)-[histone H3] + 3 S-adenosyl-L-homocysteine + 3 H(+). Its function is as follows. Polycomb group (PcG) protein. Catalytic subunit of the prc2/eed-ezh2 complex, which methylates 'Lys-9' and 'Lys-27' of histone H3, leading to transcriptional repression of the affected target gene. May regulate the circadian clock via histone methylation at the promoter of the circadian genes. The sequence is that of Histone-lysine N-methyltransferase EZH2 (ezh2-b) from Xenopus laevis (African clawed frog).